Here is a 296-residue protein sequence, read N- to C-terminus: UDP-N-acetylglucosamine transporter TMEM241 (296 aa).

Transmembrane regions (helical) follow at residues 7–29 (LVGLTFCTCYLASYLTNKYVLSV), 32–52 (FTYPTLFQGWQTLIGGLLLHV), 67–87 (SHVLVWLPASVLFVGIIYAGS), 93–113 (LAIPVFLTLHNVAEVIICGYQ), 121–141 (TSPAKICSALLLLAAAGCLPF), 146–166 (FNPDGYFWAIIHLLCVGAYKI), 187–207 (IFSVVLLAFASHPTGDLFSVL), 211–231 (FLYFYRFHGSCCASGFLGFFL), 250–270 (WIFFAKIITAGLSILLFDAIL), and 271–291 (TSATTGCLLLGALGEALLVFS).

This sequence belongs to the nucleotide-sugar transporter family. SLC35A subfamily.

It localises to the golgi apparatus. It is found in the cis-Golgi network membrane. Functionally, golgi-localized UDP-N-acetylglucosamine (UDP-GlcNAc) transporter that transports UDP-N-acetylglucosamine into Golgi lumen. Contributes to lysosomal targeting of NPC2, a key protein required for lysosomal cholesterol exiting, and that utilizes the mannose-6-phosphate (M6P) modification pathway for its lysosomal targeting. This Homo sapiens (Human) protein is UDP-N-acetylglucosamine transporter TMEM241.